The primary structure comprises 237 residues: 2-C-methyl-D-erythritol 4-phosphate cytidylyltransferase (237 aa).

The protein belongs to the IspD/TarI cytidylyltransferase family. IspD subfamily.

The enzyme catalyses 2-C-methyl-D-erythritol 4-phosphate + CTP + H(+) = 4-CDP-2-C-methyl-D-erythritol + diphosphate. It functions in the pathway isoprenoid biosynthesis; isopentenyl diphosphate biosynthesis via DXP pathway; isopentenyl diphosphate from 1-deoxy-D-xylulose 5-phosphate: step 2/6. Catalyzes the formation of 4-diphosphocytidyl-2-C-methyl-D-erythritol from CTP and 2-C-methyl-D-erythritol 4-phosphate (MEP). The sequence is that of 2-C-methyl-D-erythritol 4-phosphate cytidylyltransferase from Acaryochloris marina (strain MBIC 11017).